Here is a 708-residue protein sequence, read N- to C-terminus: G-box-binding factor (708 aa).

Disordered stretches follow at residues 1–29 and 123–339; these read MLST…GSDL and QQAQ…QTIP. Low complexity-rich tracts occupy residues 11–21, 123–219, and 227–316; these read SSSSSSSSSPS, QQAQ…QHHQ, and SQPQ…SPST. Positions 324 to 333 are enriched in basic and acidic residues; it reads ETSNSEKKDS. Tandem repeats lie at residues 339–368 and 481–510. The tract at residues 511–604 is disordered; that stretch reads VGAGLSPSSS…PTYSPNPSLP (94 aa). The span at 516–590 shows a compositional bias: low complexity; the sequence is SPSSSPSSPK…SSISQSPLQL (75 aa). A compositionally biased stretch (polar residues) spans 591–600; that stretch reads NYQTPTYSPN.

It is found in the nucleus. In terms of biological role, cAMP-responsive transcriptional activator regulating late gene expression. Essential component of the developmental switch between early and late development. Binds to a number of CA/GT-rich gene regulatory elements. This Dictyostelium discoideum (Social amoeba) protein is G-box-binding factor (gbfA).